We begin with the raw amino-acid sequence, 250 residues long: Recombination protein RecR (250 aa).

The C4-type zinc finger occupies Cys56–Cys71. The 149-residue stretch at Ser79–Pro227 folds into the Toprim domain. The disordered stretch occupies residues Leu148 to Thr172.

Belongs to the RecR family.

Functionally, may play a role in DNA repair. It seems to be involved in an RecBC-independent recombinational process of DNA repair. It may act with RecF and RecO. This chain is Recombination protein RecR, found in Corynebacterium jeikeium (strain K411).